A 491-amino-acid polypeptide reads, in one-letter code: MTTATTVKTEYEAIIGLETHCQLSTKTKIFSNSSTAFGADPNTNIDPVCMGLPGVLPVLNEKVLEYAVKTGLALNCQIARYSKFDRKQYFYPDLPKNYQISQYDLPIAEHGWLEIELVDAEGNPSRKRIGITRLHMEEDAGKLVHAGSDRLSGSSYSLVDYNRAGIPLVEIVSEPDLRSGLEAAEYAEELRRIVRYLGVSDGNMQEGSLRCDVNISVRPVGRKEFGTKVEIKNMNSFSAIQRAIDYEIERQIAAIEAGDRIIQETRLWEEGAQRTSSMRVKEGSSDYRYFPEPDLAPIEVSNEQLENWRSELPELPAQKRHHYESELGLSAYDARVLTEDRSIAEYFETAIASGANPKAAANWITQDIAAHLNKQKLTITQIELTPTNLAEIITRIETGKISNAQAKEKLPDLLSGISPEKAFAGLELITDPTVLEPIVDEVIAANPKELEKYRNGNTNLKGFFVGQVLKKTAKRADPKLTNELVEKKLNA.

This sequence belongs to the GatB/GatE family. GatB subfamily. Heterotrimer of A, B and C subunits.

It carries out the reaction L-glutamyl-tRNA(Gln) + L-glutamine + ATP + H2O = L-glutaminyl-tRNA(Gln) + L-glutamate + ADP + phosphate + H(+). The catalysed reaction is L-aspartyl-tRNA(Asn) + L-glutamine + ATP + H2O = L-asparaginyl-tRNA(Asn) + L-glutamate + ADP + phosphate + 2 H(+). In terms of biological role, allows the formation of correctly charged Asn-tRNA(Asn) or Gln-tRNA(Gln) through the transamidation of misacylated Asp-tRNA(Asn) or Glu-tRNA(Gln) in organisms which lack either or both of asparaginyl-tRNA or glutaminyl-tRNA synthetases. The reaction takes place in the presence of glutamine and ATP through an activated phospho-Asp-tRNA(Asn) or phospho-Glu-tRNA(Gln). This is Aspartyl/glutamyl-tRNA(Asn/Gln) amidotransferase subunit B from Nostoc punctiforme (strain ATCC 29133 / PCC 73102).